Here is a 331-residue protein sequence, read N- to C-terminus: NADH-ubiquinone oxidoreductase chain 1 (331 aa).

Transmembrane regions (helical) follow at residues 8 to 28 (LLEILVVLVPILLSVAFMTVI), 75 to 95 (LFFLAPMVTLIFSLLGWGVIP), 107 to 127 (LGILYSLALSSIGVYGILFAG), 147 to 167 (ISYELIYSAAVLAVILLCGTF), 178 to 198 (SVWYIMPLLPIFILFFVSALA), 224 to 244 (GMIFVFFFLAEYGSIVLMSTF), 266 to 286 (FINLQSIALAVKAVLIMFLFV), and 308 to 328 (MLPVAIALLILVPSLLIAFDI).

Belongs to the complex I subunit 1 family.

The protein localises to the mitochondrion inner membrane. It carries out the reaction a ubiquinone + NADH + 5 H(+)(in) = a ubiquinol + NAD(+) + 4 H(+)(out). In terms of biological role, core subunit of the mitochondrial membrane respiratory chain NADH dehydrogenase (Complex I) that is believed to belong to the minimal assembly required for catalysis. Complex I functions in the transfer of electrons from NADH to the respiratory chain. The immediate electron acceptor for the enzyme is believed to be ubiquinone. The polypeptide is NADH-ubiquinone oxidoreductase chain 1 (ND1) (Mycosarcoma maydis (Corn smut fungus)).